The primary structure comprises 22 residues: Odorant-binding protein 1 (22 aa).

This sequence belongs to the calycin superfamily. Lipocalin family. Homodimer. In terms of processing, the N-terminus is blocked.

Its function is as follows. Binds the chemical odorant, 2-isobutyl-3-methoxypyrazine. This Oryctolagus cuniculus (Rabbit) protein is Odorant-binding protein 1.